The chain runs to 764 residues: Palmitoyltransferase AKR1 (764 aa).

2 disordered regions span residues 1–38 (MVNE…GDSN) and 51–71 (SGNE…AEED). Residues 1 to 321 (MVNELENVPR…IKKWFKKSQH (321 aa)) are Cytoplasmic-facing. A compositionally biased stretch (polar residues) spans 10–27 (RASTLTNEEQTVDPSNND). Phosphoserine occurs at positions 51 and 57. 6 ANK repeats span residues 72 to 102 (PLLT…EVNN), 108 to 137 (EHIT…DVNA), 142 to 171 (LHAT…DPTM), 175 to 204 (QGFN…SKGL), 213 to 242 (KGRT…SIKI), and 246 to 275 (EGFT…DFFQ). A helical transmembrane segment spans residues 322-341 (AKLVTFITPFLFLGIAFALF). Over 342–346 (SHINP) the chain is Lumenal. Residues 347 to 364 (LFVIIVLFLLAIATNKGL) traverse the membrane as a helical segment. Residues 365-384 (NKFVLPSYGRMGVHNVTLLR) are Cytoplasmic-facing. The chain crosses the membrane as a helical span at residues 385–405 (SPLLSGVFFGTLLWVTIVWFF). Residues 406–418 (KVMPRTFSDEQYT) are Lumenal-facing. A helical membrane pass occupies residues 419–439 (NILMLVILVSVFYLFGQLVIM). Topologically, residues 440–513 (DPGCLPEETD…FNDVGLKNHK (74 aa)) are cytoplasmic. The region spanning 470–520 (NFCIETWIRKPLRSKFSPLNNAVVARFDHYCPWIFNDVGLKNHKAFIFFIT) is the DHHC domain. The S-palmitoyl cysteine intermediate role is filled by Cys500. The chain crosses the membrane as a helical span at residues 514–534 (AFIFFITLMESGIFTFLALCL). Over 535–570 (EYFDELEDAHEDTSQKNGKCFILGASDLCSGLIYDR) the chain is Lumenal. Residues 571–591 (FVFLILLWALLQSIWVASLIF) traverse the membrane as a helical segment. Residues 592–764 (VQAFQICKGM…KDVEQGNDMV (173 aa)) lie on the Cytoplasmic side of the membrane.

Belongs to the DHHC palmitoyltransferase family. AKR/ZDHHC17 subfamily.

The protein resides in the early endosome membrane. Its subcellular location is the golgi apparatus membrane. The enzyme catalyses L-cysteinyl-[protein] + hexadecanoyl-CoA = S-hexadecanoyl-L-cysteinyl-[protein] + CoA. Its function is as follows. Palmitoyltransferase specific for casein kinase 1. Palmitoylates isoforms YCK1 and YCK2 at both C-terminal cysteine residues, which is required for their proper plasma membrane localization. Required for constitutive endocytosis of a-factor receptor STE3 and both constitutive and pheromone-induced endocytosis of alpha-factor receptor STE2. This Saccharomyces cerevisiae (strain ATCC 204508 / S288c) (Baker's yeast) protein is Palmitoyltransferase AKR1 (AKR1).